The primary structure comprises 274 residues: Serine protease 28 (274 aa).

An N-terminal signal peptide occupies residues 1 to 26 (MFRLLLLALSCLESTVFMASVSISRS). Residues 31 to 274 (IVGGQRTPPG…SLAWIHQHIQ (244 aa)) form the Peptidase S1 domain. Cysteine 62 and cysteine 78 are disulfide-bonded. Catalysis depends on histidine 77, which acts as the Charge relay system. An N-linked (GlcNAc...) asparagine glycan is attached at asparagine 106. Aspartate 124 (charge relay system) is an active-site residue. Intrachain disulfides connect cysteine 158/cysteine 233, cysteine 191/cysteine 214, and cysteine 223/cysteine 251. Residue serine 227 is the Charge relay system of the active site.

Belongs to the peptidase S1 family. As to quaternary structure, homooligomer, heterodimer and heterotetramer. Able to form homo- and hetero- tetrameric structures. Heterotetramer is far more stable than the homotetramer. In terms of tissue distribution, expressed in embryos throughout the preimplantation period, during blastocyst hatching and embryo outgrowth. Found in uterus especially in glandular epithelium.

It is found in the secreted. Its activity is regulated as follows. Inhibited by benzamidine, (4-amidino-phenyl)-methane-sulfonyl (APMSF), N-p-tosyl-L-lysine chloromethylketone (TLCK), gabexate, mesylate, BABIM and trypsin soybean inhibitor (TSI). Its function is as follows. Involved in embryo hatching and implantation. This Mus musculus (Mouse) protein is Serine protease 28 (Prss28).